The following is a 713-amino-acid chain: Probable glutamate carboxypeptidase VP8 (713 aa).

At 1–10 the chain is on the cytoplasmic side; that stretch reads MPHSVLARLP. A helical; Signal-anchor for type II membrane protein transmembrane segment spans residues 11 to 31; the sequence is PGSVRLVAAFGLLLLVSLLVL. The Extracellular portion of the chain corresponds to 32–713; the sequence is HRRPGRPHVA…PTNFSSLVTP (682 aa). Residues N66 and N311 are each glycosylated (N-linked (GlcNAc...) asparagine). A catalytic region spans residues 245–539; it reads ATSGAERLKF…EIWGLLALRL (295 aa). Zn(2+) is bound by residues H345 and D355. E392 (nucleophile) is an active-site residue. 3 residues coordinate Zn(2+): E393, D421, and H505. N-linked (GlcNAc...) asparagine glycosylation is found at N667 and N706.

This sequence belongs to the peptidase M28 family. M28B subfamily. Zn(2+) is required as a cofactor.

The protein resides in the cell membrane. It carries out the reaction Release of an unsubstituted, C-terminal glutamyl residue, typically from Ac-Asp-Glu or folylpoly-gamma-glutamates.. Involved in the regulation of meristem development and seed maturation processes. Mediates regulation of embryonic regulatory genes and genes controlling abscisic acid (ABA) biosynthesis and turnover in developing seeds. May be required for the synthesis of small signaling molecules that integrates meristem and embryo formation in seeds. This chain is Probable glutamate carboxypeptidase VP8, found in Zea mays (Maize).